Consider the following 98-residue polypeptide: uncharacterized protein (98 aa).

Transmembrane regions (helical) follow at residues 2–22 (IVTL…GLWW) and 70–90 (AAKA…LPIL).

The protein resides in the cell membrane. This is an uncharacterized protein from Sinorhizobium fredii (strain NBRC 101917 / NGR234).